A 475-amino-acid chain; its full sequence is MKGLPVLLWLCTAVCSSYPLHGSEEDAGMEVLQKYLENYYGLEKDVKQFTKKKDSSPVVKKIQEMQKFLGLKMTGKLDSNTMELMHKPRCGVPDVGGFSTFPGSPKWRKNHISYRIVNYTLDLPRESVDSAIERALKVWEEVTPLTFSRISEGEADIMISFAVEEHGDFIPFDGPGMVLAHAYAPGPGTNGDAHFDDDERWTDDVTGTNLFLVAAHELGHSLGLFHSANAEALMYPVYKSSTDLARFHLSQDDVDGIQSLYGPPTESPDVLVVPTKSNSLDPETLPMCSSALSFDAVSTLRGEVLFFKDRHFWRKSLRTPEPGFYLISSFWPSLPSNMDAAYEVTNRDTVFILKGNQIWAIRGHEELAGYPKSIHTLGLPETVQKIDAAISLKDQKKTYFFVEDKFWRFDEKKQSMDPEFPRKIAENFPGIGTKVDAVFEAFGFLYFFSGSSQLEFDPNAGKVTHILKSNSWFNC.

The first 17 residues, 1–17 (MKGLPVLLWLCTAVCSS), serve as a signal peptide directing secretion. The propeptide at 18-97 (YPLHGSEEDA…PRCGVPDVGG (80 aa)) is activation peptide. The Cysteine switch signature appears at 88 to 95 (PRCGVPDV). Cys-90 contributes to the Zn(2+) binding site. N-linked (GlcNAc...) asparagine glycosylation is present at Asn-118. Residues Asp-122 and Asp-156 each coordinate Ca(2+). Zn(2+) contacts are provided by His-166 and Asp-168. Ca(2+) contacts are provided by Asp-173, Gly-174, Gly-176, and Val-178. A Zn(2+)-binding site is contributed by His-181. Positions 188, 190, and 192 each coordinate Ca(2+). Position 194 (His-194) interacts with Zn(2+). Residues Asp-196, Asp-197, and Glu-199 each coordinate Ca(2+). His-216 lines the Zn(2+) pocket. The active site involves Glu-217. Zn(2+)-binding residues include His-220 and His-226. Hemopexin repeat units lie at residues 285–334 (LPMC…WPSL), 335–381 (PSNM…GLPE), 383–431 (VQKI…FPGI), and 432–475 (GTKV…WFNC). Cys-288 and Cys-475 form a disulfide bridge. A Ca(2+)-binding site is contributed by Asp-295. Ca(2+) is bound by residues Asp-387 and Asp-436.

This sequence belongs to the peptidase M10A family. Requires Ca(2+) as cofactor. Zn(2+) serves as cofactor.

The protein localises to the secreted. It localises to the extracellular space. Its subcellular location is the extracellular matrix. The catalysed reaction is Preferential cleavage where P1', P2' and P3' are hydrophobic residues.. Its activity is regulated as follows. Inhibited by a synthetic peptide corresponding to the inhibitory cysteine switch motif. Inhibited by ethylenediaminetetraacetic acid (EDTA), 1,10-pheanthroline, 2-mecaptoethanol, dithiothreitol and metalloproteinase inhibitor protein TIMP. Functionally, can degrade fibronectin, laminin, gelatins of type I, III, IV, and V; collagens III, IV, X, and IX, and cartilage proteoglycans. Activates procollagenase. In terms of biological role, metalloproteinase with a rather broad substrate specificity that can degrade fibronectin, laminin, gelatins of type I, III, IV, and V; collagens III, IV, X, and IX, and cartilage proteoglycans. Activates different molecules including growth factors, plasminogen or other matrix metalloproteinases such as MMP9. Once released into the extracellular matrix (ECM), the inactive pro-enzyme is activated by the plasmin cascade signaling pathway. Also acts intracellularly. For example, in dopaminergic neurons, gets activated by the serine protease HTRA2 upon stress and plays a pivotal role in DA neuronal degeneration by mediating microglial activation and alpha-synuclein/SNCA cleavage. In addition, plays a role in immune response and possesses antiviral activity against various viruses. Mechanistically, translocates from the cytoplasm into the cell nucleus upon virus infection to influence NF-kappa-B activities. The sequence is that of Stromelysin-1 (Mmp3) from Rattus norvegicus (Rat).